The chain runs to 1360 residues: Transmembrane protein 94 (1360 aa).

At 1 to 64 (MDLREKHLGE…FLHLSNRCSC (64 aa)) the chain is on the cytoplasmic side. The helical transmembrane segment at 65-85 (FHWPGASLMLLAVLLLLCCCG) threads the bilayer. Topologically, residues 86–92 (GQPAGSQ) are lumenal. The helical transmembrane segment at 93–113 (GVELVNASALFLLLLLNLVLI) threads the bilayer. At 114–273 (GRQDRLKRRE…RPVTALDNER (160 aa)) the chain is on the cytoplasmic side. Residues serine 221 and serine 225 each carry the phosphoserine modification. A helical transmembrane segment spans residues 274-294 (FTVQSVMLHYAVPVVLAGFLI). Over 295–320 (TNALRFMFKAPGVTSWQYTLLQLQVN) the chain is Lumenal. Residues 321 to 341 (GMLPILPLLFPVLWVLATACG) form a helical membrane-spanning segment. Residues 342–1096 (EARVLAQMSK…RHATYGIRKC (755 aa)) are Cytoplasmic-facing. The DKQGIL motif lies at 417–422 (DKQGIL). A phosphoserine mark is found at serine 444, serine 445, and serine 454. The segment at 487–545 (EQERSDWLADGPKPSEPYPHHKGHGRSKHPSGSNVSFSRDTEGGEEEPSKAQPGTEGDP) is disordered. Residues 506–515 (HHKGHGRSKH) show a composition bias toward basic residues. Residues serine 517, serine 522, serine 802, and serine 945 each carry the phosphoserine modification. A helical membrane pass occupies residues 1097–1117 (FLFLLQCQLTLVVIQFLSCLV). Residues 1118–1124 (QLPPLLS) lie on the Lumenal side of the membrane. Residues 1125–1145 (TTDILWLSCFCYPLLSISLLG) traverse the membrane as a helical segment. Topologically, residues 1146–1171 (KPPHSSIMSMATGKNLQSIPKKTQHY) are cytoplasmic. Residues 1172 to 1192 (FLLCFLLKFSLTISSCLVCFG) form a helical membrane-spanning segment. The Lumenal segment spans residues 1193–1232 (FTLQSFCDSARARNLTNCSSVMLCSNDDRAPAWFEDFANG). Asparagine 1206 and asparagine 1209 each carry an N-linked (GlcNAc...) asparagine glycan. Residues 1233–1253 (LLSAQKLTAALIVLHTVFISI) traverse the membrane as a helical segment. The Cytoplasmic portion of the chain corresponds to 1254–1269 (THVHRTKPLWRKSPLT). A helical transmembrane segment spans residues 1270-1290 (NLWWAVTVPVVLLGQVVQTVV). Residues 1291 to 1310 (DLQLWTHRDSRVHFGLEDVP) are Lumenal-facing. Residues 1311-1331 (LLTWLLGCLSLVLVVVTNEIV) form a helical membrane-spanning segment. At 1332–1360 (KLHEIRVRVRYQKRQKLQFETKLGMNSPF) the chain is on the cytoplasmic side. The GMN; metal-binding motif signature appears at 1355–1357 (GMN).

As to quaternary structure, forms homooligomers.

Its subcellular location is the endoplasmic reticulum membrane. Functionally, could function in the uptake of Mg(2+) from the cytosol into the endoplasmic reticulum and regulate intracellular Mg(2+) homeostasis. The protein is Transmembrane protein 94 of Mus musculus (Mouse).